Here is a 649-residue protein sequence, read N- to C-terminus: 2-hydroxyacyl-CoA lyase 2 (649 aa).

The helical transmembrane segment at 2–21 (FHLIPFVVAFLLVFLTWFLI) threads the bilayer. Residue glutamate 84 coordinates thiamine diphosphate. Residues 474 to 554 (DFVGSAAYIL…AIGVIGNDAC (81 aa)) are thiamine pyrophosphate binding. Residues aspartate 525 and asparagine 551 each contribute to the Mg(2+) site.

It belongs to the TPP enzyme family. It depends on Mg(2+) as a cofactor. Requires thiamine diphosphate as cofactor.

It is found in the endoplasmic reticulum membrane. The catalysed reaction is 2-hydroxyoctadecanoyl-CoA = heptadecanal + formyl-CoA. It carries out the reaction (2R)-hydroxyhexadecanoyl-CoA = pentadecanal + formyl-CoA. Functionally, endoplasmic reticulum 2-OH acyl-CoA lyase involved in the cleavage (C1 removal) reaction in the fatty acid alpha-oxydation in a thiamine pyrophosphate (TPP)-dependent manner. Involved in the phytosphingosine degradation pathway. This Xenopus laevis (African clawed frog) protein is 2-hydroxyacyl-CoA lyase 2 (ilvbl).